The chain runs to 400 residues: EARP-interacting protein homolog (400 aa).

Positions 95 to 114 are disordered; sequence NNNSNNTNNNDNTNNNTNNN. Residues 96–114 are compositionally biased toward low complexity; that stretch reads NNSNNTNNNDNTNNNTNNN. 3 WD repeats span residues 138 to 178, 227 to 267, and 271 to 311; these read GHTG…NEPT, AHSE…DPVK, and GHNH…SAFN. Over residues 314-333 the composition is skewed to low complexity; the sequence is NNISNSNEQQHSQQPNEQQP. A disordered region spans residues 314 to 348; that stretch reads NNISNSNEQQHSQQPNEQQPQQPPQPVKQKKNKRN. The stretch at 358–397 is one WD 4 repeat; sequence EHEDSVYNISWSSSNFLFASLSYDGRFVVNNVPKEYSDIL.

This sequence belongs to the WD repeat EIPR1 family.

In Dictyostelium discoideum (Social amoeba), this protein is EARP-interacting protein homolog.